Reading from the N-terminus, the 212-residue chain is Adenylate kinase (212 aa).

10-15 serves as a coordination point for ATP; the sequence is GSGKGT. The NMP stretch occupies residues 30 to 59; sequence STGDLMRKEINDETPLGIECARYMNEGRLV. AMP-binding positions include Thr-31, Arg-36, 57–59, and Gln-90; that span reads RLV. Residues 124–161 form an LID region; the sequence is GRLICPKCKVSYHIISRKPKLEGICDNDGTELVRRPDD. ATP is bound at residue Arg-125. Zn(2+) contacts are provided by Cys-128 and Cys-131. Position 134 to 135 (134 to 135) interacts with ATP; sequence SY. Cys-148 and Asp-151 together coordinate Zn(2+). Residues Arg-158 and Arg-169 each contribute to the AMP site. Asn-198 lines the ATP pocket.

The protein belongs to the adenylate kinase family. In terms of assembly, monomer.

It is found in the cytoplasm. It catalyses the reaction AMP + ATP = 2 ADP. The protein operates within purine metabolism; AMP biosynthesis via salvage pathway; AMP from ADP: step 1/1. Its function is as follows. Catalyzes the reversible transfer of the terminal phosphate group between ATP and AMP. Plays an important role in cellular energy homeostasis and in adenine nucleotide metabolism. This Mesoplasma florum (strain ATCC 33453 / NBRC 100688 / NCTC 11704 / L1) (Acholeplasma florum) protein is Adenylate kinase.